Here is a 715-residue protein sequence, read N- to C-terminus: Fatty acid oxidation complex subunit alpha (715 aa).

The enoyl-CoA hydratase/isomerase stretch occupies residues 1 to 190; it reads MIYEGKAITV…KVSAVDAVVT (190 aa). D297 provides a ligand contact to substrate. A 3-hydroxyacyl-CoA dehydrogenase region spans residues 312–715; it reads KDVKQAAVLG…MAKNGQSFFG (404 aa). NAD(+)-binding positions include M325, D344, 401 to 403, K408, and S430; that span reads VVE. H451 serves as the catalytic For 3-hydroxyacyl-CoA dehydrogenase activity. N454 contacts NAD(+). N501 and Y660 together coordinate substrate.

It in the N-terminal section; belongs to the enoyl-CoA hydratase/isomerase family. This sequence in the C-terminal section; belongs to the 3-hydroxyacyl-CoA dehydrogenase family. Heterotetramer of two alpha chains (FadB) and two beta chains (FadA).

It carries out the reaction a (3S)-3-hydroxyacyl-CoA + NAD(+) = a 3-oxoacyl-CoA + NADH + H(+). The catalysed reaction is a (3S)-3-hydroxyacyl-CoA = a (2E)-enoyl-CoA + H2O. It catalyses the reaction a 4-saturated-(3S)-3-hydroxyacyl-CoA = a (3E)-enoyl-CoA + H2O. The enzyme catalyses (3S)-3-hydroxybutanoyl-CoA = (3R)-3-hydroxybutanoyl-CoA. It carries out the reaction a (3Z)-enoyl-CoA = a 4-saturated (2E)-enoyl-CoA. The catalysed reaction is a (3E)-enoyl-CoA = a 4-saturated (2E)-enoyl-CoA. It participates in lipid metabolism; fatty acid beta-oxidation. Its function is as follows. Involved in the aerobic and anaerobic degradation of long-chain fatty acids via beta-oxidation cycle. Catalyzes the formation of 3-oxoacyl-CoA from enoyl-CoA via L-3-hydroxyacyl-CoA. It can also use D-3-hydroxyacyl-CoA and cis-3-enoyl-CoA as substrate. This Pseudomonas fragi protein is Fatty acid oxidation complex subunit alpha.